Here is a 204-residue protein sequence, read N- to C-terminus: Casparian strip membrane protein 3 (204 aa).

Over 1–41 the chain is Cytoplasmic; it reads MKNESTFIDVPADSSSAMKGKAPLIGVAKDHTASGSGGYNR. A helical membrane pass occupies residues 42–62; it reads GLSIFDFLLRLAAIVAASVAA. Over 63–92 the chain is Extracellular; that stretch reads GTMFTSDETLPFFTQFLQFQAGYDDLPTFQ. A helical transmembrane segment spans residues 93 to 113; the sequence is FFVISMSLVSGYIVLSLPISV. The Cytoplasmic portion of the chain corresponds to 114-125; sequence VTIVRPLAAAPR. Residues 126 to 146 form a helical membrane-spanning segment; that stretch reads LLLLVLDTAVMGLTMAAASSA. The Extracellular portion of the chain corresponds to 147–204; sequence AAISYVAHNGNQNTNWLPICQQFGDFCQKTSGGCGLFLCRRRVFHDPGCPLRSRSQRH.

It belongs to the Casparian strip membrane proteins (CASP) family. Homodimer and heterodimers.

It is found in the cell membrane. Regulates membrane-cell wall junctions and localized cell wall deposition. Required for establishment of the Casparian strip membrane domain (CSD) and the subsequent formation of Casparian strips, a cell wall modification of the root endodermis that determines an apoplastic barrier between the intraorganismal apoplasm and the extraorganismal apoplasm and prevents lateral diffusion. This Raphanus sativus (Radish) protein is Casparian strip membrane protein 3.